Reading from the N-terminus, the 515-residue chain is 2-isopropylmalate synthase (515 aa).

Residues 5 to 267 (VIIFDTTLRD…DTRINTQEIH (263 aa)) enclose the Pyruvate carboxyltransferase domain. Mn(2+)-binding residues include Asp-14, His-202, His-204, and Asn-238. The interval 392–515 (VLDKLSAHST…VADIKSHKHH (124 aa)) is regulatory domain.

Belongs to the alpha-IPM synthase/homocitrate synthase family. LeuA type 1 subfamily. As to quaternary structure, homodimer. Mn(2+) serves as cofactor.

It is found in the cytoplasm. It carries out the reaction 3-methyl-2-oxobutanoate + acetyl-CoA + H2O = (2S)-2-isopropylmalate + CoA + H(+). It functions in the pathway amino-acid biosynthesis; L-leucine biosynthesis; L-leucine from 3-methyl-2-oxobutanoate: step 1/4. Its function is as follows. Catalyzes the condensation of the acetyl group of acetyl-CoA with 3-methyl-2-oxobutanoate (2-ketoisovalerate) to form 3-carboxy-3-hydroxy-4-methylpentanoate (2-isopropylmalate). This Haemophilus influenzae (strain 86-028NP) protein is 2-isopropylmalate synthase.